Here is a 90-residue protein sequence, read N- to C-terminus: RNA-binding protein Hfq (90 aa).

The 60-residue stretch at 9 to 68 folds into the Sm domain; sequence EPFLNTLRKEKVPVSIYLVNGIKLQGQIESFDQFVVLLRNNVNQMVYKHAISTIVPARRV.

This sequence belongs to the Hfq family. In terms of assembly, homohexamer.

Its function is as follows. RNA chaperone that binds small regulatory RNA (sRNAs) and mRNAs to facilitate mRNA translational regulation in response to envelope stress, environmental stress and changes in metabolite concentrations. Also binds with high specificity to tRNAs. The chain is RNA-binding protein Hfq from Halorhodospira halophila (strain DSM 244 / SL1) (Ectothiorhodospira halophila (strain DSM 244 / SL1)).